The chain runs to 888 residues: uncharacterized protein (888 aa).

A signal peptide spans 1-20; that stretch reads MKILKSLVLLVLFIVMPAKA. Transmembrane regions (helical) follow at residues 513 to 533, 565 to 585, 611 to 631, 649 to 669, 682 to 702, and 781 to 801; these read IVKAALTLYVIIFGLMFVAGA, TYFFSVFTDGINFFITNVVGA, LLFIELLQIHNGLAFIAIITI, VIAFIGITVMISLAPFFIILM, ISTLLSYVVQPTILLIFFLLI, and LLFYSYCLMSYGLVTFVNIVV.

This sequence belongs to the TrbL/VirB6 family.

The protein resides in the cell membrane. This is an uncharacterized protein from Rickettsia prowazekii (strain Madrid E).